The following is a 1330-amino-acid chain: ESX-3 secretion system protein EccC3 (1330 aa).

Transmembrane regions (helical) follow at residues 43–63 (LPYLIGILIVGMIVALVATGM) and 65–85 (VISPQTLFFPFVLLLAATALY). FtsK domains follow at residues 456 to 662 (GEPL…SVSR), 811 to 1000 (RDPL…RDSN), and 1090 to 1280 (LAPV…ADSG). ATP-binding positions include 479–486 (GMTGSGKS), 829–836 (GGPKSGKS), and 1107–1114 (GDARSGKT).

Part of the ESX-3 / type VII secretion system (T7SS), which is composed of cytosolic and membrane components. The ESX-3 membrane complex is composed of EccB3, EccC3, EccD3 and EccE3.

It localises to the cell inner membrane. Functionally, part of the ESX-3 specialized secretion system, which is important for iron and zinc uptake or homeostasis. The protein is ESX-3 secretion system protein EccC3 of Mycobacterium tuberculosis (strain ATCC 25618 / H37Rv).